The chain runs to 410 residues: Lipid droplet-regulating VLDL assembly factor AUP1 (410 aa).

Residue Met1 is modified to N-acetylmethionine. Residues 1–20 (MEPPPAPGPERLFDSHRLPS) are Cytoplasmic-facing. The stretch at 21–41 (DGFLLLALLLYAPVGLCLLVL) is an intramembrane region. Residues 42–410 (RLFLGLHVFL…FRERQAQEAE (369 aa)) lie on the Cytoplasmic side of the membrane. The disordered stretch occupies residues 259 to 293 (LTPADKAEHMKRQRHPRLRPQSVQSSFPSPPSPSS). Phosphoserine is present on Ser292. The CUE domain maps to 296–338 (QLTILAQRVKEVLPHVPLNVIQRDLARTGCVDLTITNLLEGAV). A disordered region spans residues 348–367 (GSQSLPTASAPKFPSSGLVT). Position 363 is a phosphoserine (Ser363). Thr367 bears the Phosphothreonine mark.

It belongs to the AUP1 family. Identified in a complex that contains SEL1L, OS9, FAF2/UBXD8, UBE2J1/UBC6E and AUP1. Interacts with the cytoplasmic tail of ITGA2B, ITGA1, ITGA2, ITGA5, ITGAV and ITGAM. Interacts (via C-terminus) with UBE2G2; the interaction recruits UBE2G2 to lipid droplets. Interacts with ubiquitin ligases AMFR/gp78 and RNF139/TRC8; this promotes interaction of UBE2G2 with AMFR and RNF139. Interacts with apolipoprotein APOB. Post-translationally, monoubiquitinated and diubiquitinated.

The protein resides in the endoplasmic reticulum membrane. It is found in the lipid droplet. In terms of biological role, plays a role in the translocation of terminally misfolded proteins from the endoplasmic reticulum lumen to the cytoplasm and their degradation by the proteasome. Plays a role in lipid droplet formation. Induces lipid droplet clustering. Recruits ubiquitin-conjugating enzyme UBE2G2 to lipid droplets which facilitates its interaction with ubiquitin ligases AMFR/gp78 and RNF139/TRC8, leading to sterol-induced ubiquitination of HMGCR and its subsequent proteasomal degradation. Also required for the degradation of INSIG1, SREBF1 and SREBF2. Plays a role in regulating assembly and secretion of very low density lipoprotein particles and stability of apolipoprotein APOB. The chain is Lipid droplet-regulating VLDL assembly factor AUP1 from Rattus norvegicus (Rat).